The chain runs to 368 residues: Molybdenum import ATP-binding protein ModC (368 aa).

In terms of domain architecture, ABC transporter spans 1–231; the sequence is MKGLQVAFKQ…QAMRPWQSFS (231 aa). Position 33–40 (33–40) interacts with ATP; that stretch reads GRSGAGKT. Positions 292–363 constitute a Mop domain; it reads KTSIRNIIEA…IKGVSVTQRD (72 aa).

Belongs to the ABC transporter superfamily. Molybdate importer (TC 3.A.1.8) family. In terms of assembly, the complex is composed of two ATP-binding proteins (ModC), two transmembrane proteins (ModB) and a solute-binding protein (ModA).

It is found in the cell inner membrane. It catalyses the reaction molybdate(out) + ATP + H2O = molybdate(in) + ADP + phosphate + H(+). Part of the ABC transporter complex ModABC involved in molybdenum import. Responsible for energy coupling to the transport system. In Vibrio vulnificus (strain YJ016), this protein is Molybdenum import ATP-binding protein ModC.